A 386-amino-acid polypeptide reads, in one-letter code: UDP-N-acetylbacillosamine transaminase (386 aa).

Substrate is bound by residues 25 to 28 (NYIA), alanine 56, and serine 179. At lysine 184 the chain carries N6-(pyridoxal phosphate)lysine. Substrate-binding positions include asparagine 227 and 325-328 (QIET).

Belongs to the DegT/DnrJ/EryC1 family. Pyridoxal 5'-phosphate is required as a cofactor.

The enzyme catalyses UDP-N-acetylbacillosamine + 2-oxoglutarate = UDP-2-acetamido-2,6-dideoxy-alpha-D-xylo-hex-4-ulose + L-glutamate. It participates in protein modification; protein glycosylation. In terms of biological role, aminotransferase involved in the bacillosamine biosynthesis pathway by producing UDP-4-amino-4,6-dideoxy-alpha-D-GlcNAc (UDP-2-acetamido-4-amino-2,4,6-trideoxy-alpha-D-glucopyranose), a precursor used in the production of the glycan component 2,4-diacetamido-2,4,6-trideoxy-alpha-D-glucopyranose. Required for host colonization and virulence. Involved in the N-linked protein glycosylation pathway. The protein is UDP-N-acetylbacillosamine transaminase (pglE) of Campylobacter jejuni subsp. jejuni serotype O:2 (strain ATCC 700819 / NCTC 11168).